The chain runs to 428 residues: GTPase Obg (428 aa).

The Obg domain occupies 1 to 158 (MFIDIAKVFI…LSIVLELKLL (158 aa)). An OBG-type G domain is found at 159-331 (ADVGLLGFPN…VIKEAARMLK (173 aa)). GTP-binding positions include 165-172 (GFPNVGKS), 190-194 (FTTLK), 212-215 (DIPG), 282-285 (NKSD), and 312-314 (SAA). Ser172 and Thr192 together coordinate Mg(2+). The 84-residue stretch at 345 to 428 (MYIPEEKKFT…LNDFEFEYLL (84 aa)) folds into the OCT domain.

The protein belongs to the TRAFAC class OBG-HflX-like GTPase superfamily. OBG GTPase family. As to quaternary structure, monomer. Mg(2+) is required as a cofactor.

The protein localises to the cytoplasm. In terms of biological role, an essential GTPase which binds GTP, GDP and possibly (p)ppGpp with moderate affinity, with high nucleotide exchange rates and a fairly low GTP hydrolysis rate. Plays a role in control of the cell cycle, stress response, ribosome biogenesis and in those bacteria that undergo differentiation, in morphogenesis control. The chain is GTPase Obg from Clostridium botulinum (strain Alaska E43 / Type E3).